Reading from the N-terminus, the 514-residue chain is Uridylate cyclase (514 aa).

Guanylate cyclase domains lie at 49–190 and 286–428; these read VHMY…AKLA and VSLY…EKRQ. Residues Y52, R105, F178, 184–188, and 291–296 each bind a ribonucleoside 5'-triphosphate; these read NHAAK and DIDGFT. Positions 291, 292, and 339 each coordinate Ca(2+). Residue D291 participates in Mn(2+) binding. A disordered region spans residues 495-514; the sequence is IRADERQVQPHSRQKVDGSR. Basic and acidic residues predominate over residues 496 to 514; the sequence is RADERQVQPHSRQKVDGSR.

The protein belongs to the adenylyl cyclase class-4/guanylyl cyclase family. Pyrimidine cyclase subfamily. In terms of assembly, monomer. A divalent metal cation serves as cofactor.

It localises to the cytoplasm. It carries out the reaction UTP = 3',5'-cyclic UMP + diphosphate. Its function is as follows. Pycsar (pyrimidine cyclase system for antiphage resistance) provides immunity against bacteriophage. The pyrimidine cyclase (PycC) synthesizes cyclic nucleotides in response to infection; these serve as specific second messenger signals. The signals activate the adjacent effector, leading to bacterial cell death and abortive phage infection. A clade A Pycsar system. The pyrimidine cyclase gene of a two-gene Pycsar system, generates cyclic UMP (cUMP) from UTP, has little to no activity on ATP, CTP or GTP. Expression of this and adjacent effector PaPycTIR (AC P0DV41) probably confers resistance to bacteriophage. The genes are probably only expressed in response to bacteriophage infection. Does not have adenylyl or guanylyl cyclase activity. The protein is Uridylate cyclase of Pseudomonas aeruginosa.